The chain runs to 380 residues: Two-component response regulator ORR28 (380 aa).

Residues Ser-13 to Asp-130 enclose the Response regulatory domain. Asp-65 carries the 4-aspartylphosphate modification. Positions Arg-169 to Lys-223 form a DNA-binding region, myb-like GARP. Positions Leu-225–Asn-245 are disordered. Over residues Ala-228–Asn-245 the composition is skewed to polar residues.

The protein belongs to the ARR family. Type-B subfamily. Two-component system major event consists of a His-to-Asp phosphorelay between a sensor histidine kinase (HK) and a response regulator (RR). In plants, the His-to-Asp phosphorelay involves an additional intermediate named Histidine-containing phosphotransfer protein (HPt). This multistep phosphorelay consists of a His-Asp-His-Asp sequential transfer of a phosphate group between first a His and an Asp of the HK protein, followed by the transfer to a conserved His of the HPt protein and finally the transfer to an Asp in the receiver domain of the RR protein.

It is found in the nucleus. Its function is as follows. Transcriptional activator that binds specific DNA sequence. Functions as a response regulator involved in His-to-Asp phosphorelay signal transduction system. Phosphorylation of the Asp residue in the receiver domain activates the ability of the protein to promote the transcription of target genes. May directly activate some type-A response regulators in response to cytokinins. The polypeptide is Two-component response regulator ORR28 (Oryza sativa subsp. indica (Rice)).